Reading from the N-terminus, the 89-residue chain is Small ribosomal subunit protein uS15 (89 aa).

This sequence belongs to the universal ribosomal protein uS15 family. As to quaternary structure, part of the 30S ribosomal subunit. Forms a bridge to the 50S subunit in the 70S ribosome, contacting the 23S rRNA.

Functionally, one of the primary rRNA binding proteins, it binds directly to 16S rRNA where it helps nucleate assembly of the platform of the 30S subunit by binding and bridging several RNA helices of the 16S rRNA. Forms an intersubunit bridge (bridge B4) with the 23S rRNA of the 50S subunit in the ribosome. The protein is Small ribosomal subunit protein uS15 of Clavibacter michiganensis subsp. michiganensis (strain NCPPB 382).